A 289-amino-acid chain; its full sequence is Ribosome-inactivating protein alpha-trichosanthin (289 aa).

The N-terminal stretch at 1–23 (MIRFLVLSLLILTLFLTTPAVEG) is a signal peptide. Glu-183 is an active-site residue. Positions 271 to 289 (AMDDDVPMTQSFGCGSYAI) are cleaved as a propeptide — removed in mature form.

It belongs to the ribosome-inactivating protein family. Type 1 RIP subfamily.

It carries out the reaction Endohydrolysis of the N-glycosidic bond at one specific adenosine on the 28S rRNA.. Functionally, inactivates eukaryotic 60S ribosomal subunits. In Trichosanthes kirilowii (Chinese snake gourd), this protein is Ribosome-inactivating protein alpha-trichosanthin.